Here is a 467-residue protein sequence, read N- to C-terminus: 2-succinylbenzoate--CoA ligase (467 aa).

This sequence belongs to the ATP-dependent AMP-binding enzyme family. MenE subfamily.

It catalyses the reaction 2-succinylbenzoate + ATP + CoA = 2-succinylbenzoyl-CoA + AMP + diphosphate. The protein operates within quinol/quinone metabolism; 1,4-dihydroxy-2-naphthoate biosynthesis; 1,4-dihydroxy-2-naphthoate from chorismate: step 5/7. Its pathway is quinol/quinone metabolism; menaquinone biosynthesis. Functionally, converts 2-succinylbenzoate (OSB) to 2-succinylbenzoyl-CoA (OSB-CoA). The polypeptide is 2-succinylbenzoate--CoA ligase (Listeria monocytogenes serovar 1/2a (strain ATCC BAA-679 / EGD-e)).